A 511-amino-acid polypeptide reads, in one-letter code: Maturase K (511 aa).

It belongs to the intron maturase 2 family. MatK subfamily.

The protein resides in the plastid. It localises to the chloroplast. In terms of biological role, usually encoded in the trnK tRNA gene intron. Probably assists in splicing its own and other chloroplast group II introns. The chain is Maturase K from Chloranthus spicatus (Chulantree).